Here is a 248-residue protein sequence, read N- to C-terminus: Mannose-binding protein C (248 aa).

A signal peptide spans 1-20; that stretch reads MSLFPSLTLLLLSVVATSYS. One can recognise a Collagen-like domain in the interval 42-99; sequence GINGFPGKDGRDGTKGEKGEPGQGLRGLQGPPGKLGPPGNPGSSGSPGPKGQKGDPGE. Residues 43–113 are disordered; sequence INGFPGKDGR…DSSLAASERK (71 aa). P47 is modified (4-hydroxyproline). The span at 49–61 shows a compositional bias: basic and acidic residues; it reads KDGRDGTKGEKGE. 4-hydroxyproline occurs at positions 73, 79, 82, and 88. Over residues 82–91 the composition is skewed to low complexity; sequence PGSSGSPGPK. Residues 112–130 adopt a coiled-coil conformation; the sequence is RKALQTEMARIKKWLTFSL. The region spanning 134-245 is the C-type lectin domain; the sequence is VGNKFFLTNG…CSSSHLALCE (112 aa). Intrachain disulfides connect C155–C244 and C222–C236.

As to quaternary structure, oligomeric complex of 3 or more homotrimers. Interacts with MASP1 and MASP2. Interacts with MEP1A and MEP1B and may inhibit their catalytic activity. Hydroxylation on proline residues within the sequence motif, GXPG, is most likely to be 4-hydroxy as this fits the requirement for 4-hydroxylation in vertebrates.

The protein localises to the secreted. Its function is as follows. Calcium-dependent lectin involved in innate immune defense. Binds mannose, fucose and N-acetylglucosamine on different microorganisms and activates the lectin complement pathway. Binds to late apoptotic cells, as well as to apoptotic blebs and to necrotic cells, but not to early apoptotic cells, facilitating their uptake by macrophages. This Chlorocebus aethiops (Green monkey) protein is Mannose-binding protein C (MBL2).